We begin with the raw amino-acid sequence, 455 residues long: Ribosomal protein uS12 methylthiotransferase RimO (455 aa).

Residues 1–114 (MKYHIVTLGC…INALVGQLER (114 aa)) enclose the MTTase N-terminal domain. The [4Fe-4S] cluster site is built by Cys10, Cys46, Cys78, Cys166, Cys170, and Cys173. A Radical SAM core domain is found at 152–383 (THQTPSAYLK…MRLQQTISYT (232 aa)). The TRAM domain maps to 386–455 (QRWVGRTIKV…AYDLWGEALS (70 aa)).

This sequence belongs to the methylthiotransferase family. RimO subfamily. [4Fe-4S] cluster is required as a cofactor.

The protein localises to the cytoplasm. The enzyme catalyses L-aspartate(89)-[ribosomal protein uS12]-hydrogen + (sulfur carrier)-SH + AH2 + 2 S-adenosyl-L-methionine = 3-methylsulfanyl-L-aspartate(89)-[ribosomal protein uS12]-hydrogen + (sulfur carrier)-H + 5'-deoxyadenosine + L-methionine + A + S-adenosyl-L-homocysteine + 2 H(+). Functionally, catalyzes the methylthiolation of an aspartic acid residue of ribosomal protein uS12. The chain is Ribosomal protein uS12 methylthiotransferase RimO from Chloroflexus aurantiacus (strain ATCC 29366 / DSM 635 / J-10-fl).